A 193-amino-acid polypeptide reads, in one-letter code: Recombination protein RecR (193 aa).

Residues 61 to 76 (CTSCNALSESEVCEIC) form a C4-type zinc finger. Residues 84-170 (SQLCMVLHPR…TFTKIAQGVP (87 aa)) form the Toprim domain.

It belongs to the RecR family.

Its function is as follows. May play a role in DNA repair. It seems to be involved in an RecBC-independent recombinational process of DNA repair. It may act with RecF and RecO. The polypeptide is Recombination protein RecR (Helicobacter pylori (strain HPAG1)).